The sequence spans 306 residues: Oxygen-dependent coproporphyrinogen-III oxidase (306 aa).

S94 is a substrate binding site. The a divalent metal cation site is built by H98 and H108. H108 serves as the catalytic Proton donor. 110-112 (NVR) contacts substrate. A divalent metal cation is bound by residues H147 and H177. Residues 242–277 (YVEFNLVYDRGTLFGLQTGGRTESILMSMPPLVRWQ) are important for dimerization. 260-262 (GGR) provides a ligand contact to substrate.

The protein belongs to the aerobic coproporphyrinogen-III oxidase family. As to quaternary structure, homodimer. A divalent metal cation is required as a cofactor.

The protein resides in the cytoplasm. The catalysed reaction is coproporphyrinogen III + O2 + 2 H(+) = protoporphyrinogen IX + 2 CO2 + 2 H2O. The protein operates within porphyrin-containing compound metabolism; protoporphyrin-IX biosynthesis; protoporphyrinogen-IX from coproporphyrinogen-III (O2 route): step 1/1. Involved in the heme biosynthesis. Catalyzes the aerobic oxidative decarboxylation of propionate groups of rings A and B of coproporphyrinogen-III to yield the vinyl groups in protoporphyrinogen-IX. The sequence is that of Oxygen-dependent coproporphyrinogen-III oxidase from Shewanella sediminis (strain HAW-EB3).